A 228-amino-acid polypeptide reads, in one-letter code: UPF0173 metal-dependent hydrolase Lm4b_01588 (228 aa).

It belongs to the UPF0173 family.

This Listeria monocytogenes serotype 4b (strain CLIP80459) protein is UPF0173 metal-dependent hydrolase Lm4b_01588.